A 406-amino-acid chain; its full sequence is Lymphocyte transmembrane adapter 1 (406 aa).

The tract at residues 1–25 is disordered; sequence MYTTPAPPEITRRSSEPSTQQGTLG. Topologically, residues 1–33 are extracellular; sequence MYTTPAPPEITRRSSEPSTQQGTLGSLEGEKGH. Residues 34–54 form a helical; Signal-anchor for type III membrane protein membrane-spanning segment; it reads LLFPGFVVLVTIFLVVIVTCI. The Cytoplasmic segment spans residues 55–406; sequence LWSRKKQKKR…LATETSGEEV (352 aa). The interval 109 to 131 is disordered; it reads ESLLSRASDSPEPEVPQASGSLQ. Tyr-184 carries the phosphotyrosine modification. Residues 219–258 are disordered; it reads AEGGHAGCGKATDRTGVWAPGLQGSNSLSEGDDSSQSSND. The span at 242 to 258 shows a compositional bias: low complexity; it reads GSNSLSEGDDSSQSSND. A phosphotyrosine mark is found at Tyr-259, Tyr-285, and Tyr-352. Residues 358-406 form a disordered region; the sequence is PELEGKDWKQGPGTWHPSDERTPSDQAGKFCEAVYPAGSLATETSGEEV.

When phosphorylated, interacts with GRB2, PIK3R1 and GRAP2. In terms of processing, phosphorylated on tyrosines upon TCR or BCR activation; which leads to the recruitment of GRB2, PIK3R1 and GRAP2.

It localises to the cell membrane. Functionally, negatively regulates TCR (T-cell antigen receptor)-mediated signaling in T-cells and BCR (B-cell antigen receptor)-mediated signaling in B-cells. The polypeptide is Lymphocyte transmembrane adapter 1 (Lax1) (Rattus norvegicus (Rat)).